The following is a 550-amino-acid chain: Phosphatidylinositol 4-kinase gamma 2 (550 aa).

2 Ubiquitin-like domains span residues 34–111 (SVLV…YDPL) and 112–190 (LVTV…VEDT). The segment at 228 to 247 (VDGLNKGSPPVRSAEGTGGT) is disordered. Positions 234-532 (GSPPVRSAEG…SVLPASSEAT (299 aa)) constitute a PI3K/PI4K catalytic domain. The interval 240–246 (SAEGTGG) is G-loop. Residues 241-247 (AEGTGGT), Lys263, and 359-362 (QMFM) contribute to the ATP site. Residues 392 to 400 (ANADRHAGN) form a catalytic loop region. The activation loop stretch occupies residues 415 to 441 (PIDHGYCLPENFEDCTFEWLYWPQAKL). Asp417 lines the ATP pocket.

It belongs to the PI3/PI4-kinase family. Type II PI4K subfamily.

It is found in the membrane. It catalyses the reaction a 1,2-diacyl-sn-glycero-3-phospho-(1D-myo-inositol) + ATP = a 1,2-diacyl-sn-glycero-3-phospho-(1D-myo-inositol 4-phosphate) + ADP + H(+). The phosphorylation of phosphatidylinositol (PI) to PI4P is the first committed step in the generation of phosphatidylinositol 4,5-bisphosphate (PIP2), a precursor of the second messenger inositol 1,4,5-trisphosphate (InsP3). In Arabidopsis thaliana (Mouse-ear cress), this protein is Phosphatidylinositol 4-kinase gamma 2 (PI4KG2).